The chain runs to 113 residues: Na(+)/H(+) antiporter subunit C (113 aa).

The next 3 membrane-spanning stretches (helical) occupy residues 4 to 21 (LMAVLAGIIFMAATYLLL), 28 to 47 (VIIGTALLSHGVHLMLLTMG), and 67 to 89 (PLPQALILTAIVISFGVTSFILV).

It belongs to the CPA3 antiporters (TC 2.A.63) subunit C family. In terms of assembly, forms a heterooligomeric complex that consists of seven subunits: MrpA, MrpB, MrpC, MrpD, MrpE, MrpF and MrpG.

It is found in the cell membrane. In terms of biological role, mrp complex is a Na(+)/H(+) antiporter that is considered to be the major Na(+) excretion system in B.subtilis. Has a major role in Na(+) resistance and a minor role in Na(+)- and K(+)-dependent pH homeostasis as compared to TetB. MrpA may be the actual Na(+)/H(+) antiporter, although the six other Mrp proteins are all required for Na(+)/H(+) antiport activity and Na(+) resistance. MrpA is required for initiation of sporulation when external Na(+) concentration increases. Also transports Li(+) but not K(+), Ca(2+) or Mg(2+). This chain is Na(+)/H(+) antiporter subunit C (mrpC), found in Bacillus subtilis (strain 168).